Reading from the N-terminus, the 295-residue chain is Nitrogenase iron protein 1 (295 aa).

12-19 (GKGGIGKS) contacts ATP. C100 contacts [4Fe-4S] cluster. ADP-ribosylarginine; by dinitrogenase reductase ADP-ribosyltransferase is present on R103. C134 serves as a coordination point for [4Fe-4S] cluster.

This sequence belongs to the NifH/BchL/ChlL family. As to quaternary structure, homodimer. Requires [4Fe-4S] cluster as cofactor. Post-translationally, the reversible ADP-ribosylation of Arg-103 inactivates the nitrogenase reductase and regulates nitrogenase activity.

It catalyses the reaction N2 + 8 reduced [2Fe-2S]-[ferredoxin] + 16 ATP + 16 H2O = H2 + 8 oxidized [2Fe-2S]-[ferredoxin] + 2 NH4(+) + 16 ADP + 16 phosphate + 6 H(+). Its function is as follows. The key enzymatic reactions in nitrogen fixation are catalyzed by the nitrogenase complex, which has 2 components: the iron protein and the molybdenum-iron protein. In Mastigocladus laminosus (Fischerella sp.), this protein is Nitrogenase iron protein 1 (nifH1).